A 780-amino-acid chain; its full sequence is Vezatin (780 aa).

2 helical membrane passes run 140-160 and 162-182; these read ATPN…LIMF and TCWI…YLII. Residues 430 to 467 are a coiled coil; it reads VRSLQLHLKALLNEVIILEDELEKLVCTKETQELLSEA. 2 disordered regions span residues 620–718 and 757–780; these read DPVE…PRDT and QEQT…VEEK. The span at 624-643 shows a compositional bias: polar residues; sequence SVSNSEPPMNSDTEKVNSNA. 2 stretches are compositionally biased toward basic and acidic residues: residues 647–663 and 690–699; these read ETSK…RTEY and TMCHQHESEA. Low complexity predominate over residues 702–711; it reads PQAAAAGATA. Acidic residues predominate over residues 761–780; it reads FGDEEEEQLVEGGENEVEEK.

It belongs to the vezatin family. As to quaternary structure, interacts with USH2A (via the cytoplasmic region); the interaction associates VEZT with the USH2 complex at the stereocilia base. Interacts with myosin MYO7A and the cadherin-catenins complex. In terms of tissue distribution, expressed in developing cochlear hair cells. Isoform 1, isoform 2 and isoform 3 are expressed in testis. In the seminiferous epithelium, present exclusively in the acrosome of spermatids (at protein level).

Its subcellular location is the cell membrane. The protein resides in the cell projection. The protein localises to the stereocilium membrane. It localises to the cell junction. It is found in the adherens junction. Its subcellular location is the nucleus. The protein resides in the cytoplasmic vesicle. The protein localises to the secretory vesicle. It localises to the acrosome. Its function is as follows. Plays a pivotal role in the establishment of adherens junctions and their maintenance in adult life. Required for morphogenesis of the preimplantation embryo, and for the implantation process. The sequence is that of Vezatin from Mus musculus (Mouse).